We begin with the raw amino-acid sequence, 479 residues long: Aspartyl/glutamyl-tRNA(Asn/Gln) amidotransferase subunit B (479 aa).

It belongs to the GatB/GatE family. GatB subfamily. Heterotrimer of A, B and C subunits.

It catalyses the reaction L-glutamyl-tRNA(Gln) + L-glutamine + ATP + H2O = L-glutaminyl-tRNA(Gln) + L-glutamate + ADP + phosphate + H(+). The enzyme catalyses L-aspartyl-tRNA(Asn) + L-glutamine + ATP + H2O = L-asparaginyl-tRNA(Asn) + L-glutamate + ADP + phosphate + 2 H(+). Functionally, allows the formation of correctly charged Asn-tRNA(Asn) or Gln-tRNA(Gln) through the transamidation of misacylated Asp-tRNA(Asn) or Glu-tRNA(Gln) in organisms which lack either or both of asparaginyl-tRNA or glutaminyl-tRNA synthetases. The reaction takes place in the presence of glutamine and ATP through an activated phospho-Asp-tRNA(Asn) or phospho-Glu-tRNA(Gln). In Halorhodospira halophila (strain DSM 244 / SL1) (Ectothiorhodospira halophila (strain DSM 244 / SL1)), this protein is Aspartyl/glutamyl-tRNA(Asn/Gln) amidotransferase subunit B.